A 438-amino-acid polypeptide reads, in one-letter code: Aspartate--tRNA(Asp/Asn) ligase (438 aa).

Glutamate 176 contacts L-aspartate. Residues 198–201 (QLYK) are aspartate. Arginine 220 is an L-aspartate binding site. Residues 220–222 (RAE), 228–230 (RHL), and glutamate 361 contribute to the ATP site. Mg(2+) is bound by residues glutamate 361 and serine 364. Residues serine 364 and arginine 368 each contribute to the L-aspartate site. 409 to 412 (GADR) is a binding site for ATP.

The protein belongs to the class-II aminoacyl-tRNA synthetase family. Type 2 subfamily. As to quaternary structure, homodimer. Mg(2+) serves as cofactor.

It is found in the cytoplasm. The catalysed reaction is tRNA(Asx) + L-aspartate + ATP = L-aspartyl-tRNA(Asx) + AMP + diphosphate. Its function is as follows. Aspartyl-tRNA synthetase with relaxed tRNA specificity since it is able to aspartylate not only its cognate tRNA(Asp) but also tRNA(Asn). Reaction proceeds in two steps: L-aspartate is first activated by ATP to form Asp-AMP and then transferred to the acceptor end of tRNA(Asp/Asn). This Methanococcus maripaludis (strain DSM 14266 / JCM 13030 / NBRC 101832 / S2 / LL) protein is Aspartate--tRNA(Asp/Asn) ligase.